Reading from the N-terminus, the 975-residue chain is Glycine dehydrogenase (decarboxylating) (975 aa).

Lys723 bears the N6-(pyridoxal phosphate)lysine mark.

Belongs to the GcvP family. The glycine cleavage system is composed of four proteins: P, T, L and H. Requires pyridoxal 5'-phosphate as cofactor.

The enzyme catalyses N(6)-[(R)-lipoyl]-L-lysyl-[glycine-cleavage complex H protein] + glycine + H(+) = N(6)-[(R)-S(8)-aminomethyldihydrolipoyl]-L-lysyl-[glycine-cleavage complex H protein] + CO2. The glycine cleavage system catalyzes the degradation of glycine. The P protein binds the alpha-amino group of glycine through its pyridoxal phosphate cofactor; CO(2) is released and the remaining methylamine moiety is then transferred to the lipoamide cofactor of the H protein. The polypeptide is Glycine dehydrogenase (decarboxylating) (Burkholderia pseudomallei (strain 668)).